The following is a 90-amino-acid chain: Mucin-like protein 1 (90 aa).

The first 20 residues, 1–20 (MKFLAVLVLLGVSIFLVSAQ), serve as a signal peptide directing secretion. O-linked (GalNAc...) threonine glycosylation is found at Thr23, Thr24, Thr30, Thr34, Thr46, Thr47, Thr51, Thr52, Thr54, Thr55, Thr59, Thr60, Thr62, and Thr63. Low complexity-rich tracts occupy residues 25–36 (AAPADTYPATGP) and 44–68 (AETT…ASTT). Positions 25–68 (AAPADTYPATGPADDEAPDAETTAAATTATTAAPTTATTAASTT) are disordered. A run of 3 repeats spans residues 46–53 (TTAAATTA), 54–61 (TTAAPTTA), and 62–69 (TTAASTTA). The interval 46–69 (TTAAATTATTAAPTTATTAASTTA) is 3 X 8 AA tandem repeat of T-T-A-A-[APS]-T-T-A. The O-linked (GalNAc...) serine glycan is linked to Ser66. Thr67 and Thr68 each carry an O-linked (GalNAc...) threonine glycan.

Post-translationally, O-glycosylated. In terms of tissue distribution, expressed in mammary, salivary glands and prostate. Also detected in lung. Mainly expressed in cancer cell lines of breast origin. Highly expressed in lymph node-positive compared with node-negative tumors. Detected in all lymph node containing metastatic cells.

The protein localises to the secreted. It is found in the membrane. Functionally, may play a role as marker for the diagnosis of metastatic breast cancer. The chain is Mucin-like protein 1 (MUCL1) from Homo sapiens (Human).